The following is a 507-amino-acid chain: METLRADEISNIIRERIEQYNREVNIVNTGTVLQVGDGIARIHGLDEVMAGELVEFDEGTIGIALNLESNNVGVVLMGDGLMIQEGSSVKATGRIAQIPVSEAYLGRVINALAKPIDGRGEISASESRLIESPAPGIISRRSVYEPLQTGLIAIDSMIPIGRGQRELIIGDRQTGKTAVATDTILNQKGQNVICVYVAIGQKASSVAQVVTTFQEQGAMEYTIVVAETADSPATLQYLAPYTGAALAEYFMYREQHTSIIYDDPSKQAQAYRQMSLLLRRPPGREAYPGDVFYLHSRLLERAAKLNSSLGEGSMTALPIVETQSGDVSAYIPTNVISITDGQIFLSSDLFNAGIRPAINVGISVSRVGSAAQIKAMKQVAGKLKLELAQFAELEAFAQFASDLDKATQNQLARGQRLRELLKQSQSAPLAVEEQIVTIYTGANGYLDPLETGQVKKFLVQLRTYLKTNKPQFQEIISSTKIFTKDAEAILKEVIPEQIELFLLQEQT.

170–177 (GDRQTGKT) lines the ATP pocket.

This sequence belongs to the ATPase alpha/beta chains family. As to quaternary structure, F-type ATPases have 2 components, CF(1) - the catalytic core - and CF(0) - the membrane proton channel. CF(1) has five subunits: alpha(3), beta(3), gamma(1), delta(1), epsilon(1). CF(0) has four main subunits: a, b, b' and c.

The protein localises to the plastid. The protein resides in the chloroplast thylakoid membrane. The catalysed reaction is ATP + H2O + 4 H(+)(in) = ADP + phosphate + 5 H(+)(out). Its function is as follows. Produces ATP from ADP in the presence of a proton gradient across the membrane. The alpha chain is a regulatory subunit. This Piper cenocladum (Ant piper) protein is ATP synthase subunit alpha, chloroplastic.